Here is a 468-residue protein sequence, read N- to C-terminus: MSPTGFTRAAAAPPPTLSRHAADTARLAAPLAIAQLSQMAMSVTDTVLLGSLGPDALAAGGLGANLFFVVVTLLQGVLTSVSVSVAHARGAMAEDRVPHIYWTGFALSLLLAVPAFALLSFAQPLLLAFGEPAALARNVGEYAAVLRFAAPGSLIGVGLMRSFLPAIGAAKRLLWVSLAGVGVNAFLNYGLIHGAFGLPRLGFLGSATATTITIWLTAITLVALLHGRSTFRHFVAATRPRLPLMGELFGIGWPVAITYGVESTLFLATGLTVGVLGESSLAAHQIALNVASVAFMVPLAIGQAANVRVGYWAGAGAPVAARHAGFVALGLGVAFMSLSGLVLIVAPHAIVGLYLKLDDPANARTVVLATSLLGIAAVFQIVDGMQTVGSGCLRGLKDTRVPMLAATLGYWGIGFPTGYWFAFHAGLGARGLWWGLAAGLASVAMLMTWRFHRKSAALGVRADARGQA.

Transmembrane regions (helical) follow at residues 57 to 79 (LAAG…GVLT), 100 to 122 (IYWT…LSFA), 142 to 164 (YAAV…RSFL), 173 to 195 (LLWV…IHGA), 205 to 227 (GSAT…LLHG), 248 to 270 (LFGI…LATG), 280 to 302 (SLAA…LAIG), 323 to 345 (HAGF…VLIV), 360 to 382 (PANA…FQIV), 401 to 423 (VPML…WFAF), and 433 to 452 (WWGL…WRFH).

It belongs to the multi antimicrobial extrusion (MATE) (TC 2.A.66.1) family.

Its subcellular location is the cell inner membrane. In terms of biological role, multidrug efflux pump. The polypeptide is Probable multidrug resistance protein NorM (norM) (Burkholderia mallei (strain ATCC 23344)).